Reading from the N-terminus, the 359-residue chain is Peptide chain release factor 1 (359 aa).

Position 236 is an N5-methylglutamine (Gln236).

This sequence belongs to the prokaryotic/mitochondrial release factor family. In terms of processing, methylated by PrmC. Methylation increases the termination efficiency of RF1.

Its subcellular location is the cytoplasm. Its function is as follows. Peptide chain release factor 1 directs the termination of translation in response to the peptide chain termination codons UAG and UAA. In Streptococcus pneumoniae (strain Hungary19A-6), this protein is Peptide chain release factor 1.